Consider the following 155-residue polypeptide: Large ribosomal subunit protein uL15 (155 aa).

The segment covering 1–13 (MKLNELRDCEGAT) has biased composition (basic and acidic residues). Residues 1–47 (MKLNELRDCEGATKNRKRIGRGIGSGTGKTGGRGVKGQKSRSGVSLN) form a disordered region. Gly residues predominate over residues 21 to 35 (RGIGSGTGKTGGRGV).

Belongs to the universal ribosomal protein uL15 family. In terms of assembly, part of the 50S ribosomal subunit.

Functionally, binds to the 23S rRNA. The polypeptide is Large ribosomal subunit protein uL15 (Bartonella tribocorum (strain CIP 105476 / IBS 506)).